The following is a 228-amino-acid chain: Ribonuclease 3 (228 aa).

Residues 5–127 enclose the RNase III domain; that stretch reads KDALQDRLGY…LFGAIYLDGG (123 aa). Glutamate 40 provides a ligand contact to Mg(2+). Residue aspartate 44 is part of the active site. Residues aspartate 113 and glutamate 116 each coordinate Mg(2+). Glutamate 116 is an active-site residue. Residues 154 to 224 form the DRBM domain; sequence DPKTRLQEHL…AEQMLKRLED (71 aa). A disordered region spans residues 200-228; that stretch reads AEGEAGSRRKAEQQAAEQMLKRLEDKHER. A compositionally biased stretch (basic and acidic residues) spans 218-228; the sequence is MLKRLEDKHER.

Belongs to the ribonuclease III family. As to quaternary structure, homodimer. Requires Mg(2+) as cofactor.

It localises to the cytoplasm. It catalyses the reaction Endonucleolytic cleavage to 5'-phosphomonoester.. Digests double-stranded RNA. Involved in the processing of primary rRNA transcript to yield the immediate precursors to the large and small rRNAs (23S and 16S). Processes some mRNAs, and tRNAs when they are encoded in the rRNA operon. Processes pre-crRNA and tracrRNA of type II CRISPR loci if present in the organism. This Alkalilimnicola ehrlichii (strain ATCC BAA-1101 / DSM 17681 / MLHE-1) protein is Ribonuclease 3.